Here is a 510-residue protein sequence, read N- to C-terminus: ATP synthase subunit alpha 1 (510 aa).

Residue 169 to 176 participates in ATP binding; that stretch reads GDRQTGKT.

The protein belongs to the ATPase alpha/beta chains family. In terms of assembly, F-type ATPases have 2 components, CF(1) - the catalytic core - and CF(0) - the membrane proton channel. CF(1) has five subunits: alpha(3), beta(3), gamma(1), delta(1), epsilon(1). CF(0) has three main subunits: a(1), b(2) and c(9-12). The alpha and beta chains form an alternating ring which encloses part of the gamma chain. CF(1) is attached to CF(0) by a central stalk formed by the gamma and epsilon chains, while a peripheral stalk is formed by the delta and b chains.

It localises to the cell inner membrane. The catalysed reaction is ATP + H2O + 4 H(+)(in) = ADP + phosphate + 5 H(+)(out). In terms of biological role, produces ATP from ADP in the presence of a proton gradient across the membrane. The alpha chain is a regulatory subunit. In Marinomonas sp. (strain MWYL1), this protein is ATP synthase subunit alpha 1.